Here is a 384-residue protein sequence, read N- to C-terminus: 8-amino-7-oxononanoate synthase (384 aa).

R21 lines the substrate pocket. 108 to 109 (GF) contacts pyridoxal 5'-phosphate. Substrate is bound at residue H133. Residues S179, H207, and T233 each contribute to the pyridoxal 5'-phosphate site. K236 bears the N6-(pyridoxal phosphate)lysine mark. T352 is a binding site for substrate.

Belongs to the class-II pyridoxal-phosphate-dependent aminotransferase family. BioF subfamily. As to quaternary structure, homodimer. Requires pyridoxal 5'-phosphate as cofactor.

The enzyme catalyses 6-carboxyhexanoyl-[ACP] + L-alanine + H(+) = (8S)-8-amino-7-oxononanoate + holo-[ACP] + CO2. Its pathway is cofactor biosynthesis; biotin biosynthesis. Catalyzes the decarboxylative condensation of pimeloyl-[acyl-carrier protein] and L-alanine to produce 8-amino-7-oxononanoate (AON), [acyl-carrier protein], and carbon dioxide. This Escherichia fergusonii (strain ATCC 35469 / DSM 13698 / CCUG 18766 / IAM 14443 / JCM 21226 / LMG 7866 / NBRC 102419 / NCTC 12128 / CDC 0568-73) protein is 8-amino-7-oxononanoate synthase.